The sequence spans 184 residues: Inner membrane-spanning protein YciB (184 aa).

5 helical membrane passes run 19–39, 52–72, 76–96, 123–143, and 151–171; these read LVGI…QLLI, LFMG…NQLE, WKVT…QYGF, LGWA…SQYL, and FKTF…GIYI.

Belongs to the YciB family.

Its subcellular location is the cell inner membrane. In terms of biological role, plays a role in cell envelope biogenesis, maintenance of cell envelope integrity and membrane homeostasis. This Pasteurella multocida (strain Pm70) protein is Inner membrane-spanning protein YciB.